Reading from the N-terminus, the 285-residue chain is MSEYTLENIAQVVEILREKSPLTHCITNVVTVKDCANAVLAVGASPIMANAPEEAEEIVGISNSLVINIGTLTKEQIETMKKSAKFAIENNKPFILDPVGVGISNIRNQTPIDIITNSKPSIIRGNLSEIKAIAMMYDILDECTMAKGVDVAQCDIINKDTLISNCNLIKNISEKLNTTIAVSGPIDIISDGHDVYTIENGDAMMSRITGSGCMLGCVLGAYLAVTNPLEAAITGTLVMGIAGELAAKTARDNNKGTGSFGIYLIDELSKLNKSTILSQSKLNKM.

M48 serves as a coordination point for substrate. ATP-binding residues include R124 and S183. Substrate is bound at residue G210.

Belongs to the Thz kinase family. It depends on Mg(2+) as a cofactor.

It catalyses the reaction 5-(2-hydroxyethyl)-4-methylthiazole + ATP = 4-methyl-5-(2-phosphooxyethyl)-thiazole + ADP + H(+). It participates in cofactor biosynthesis; thiamine diphosphate biosynthesis; 4-methyl-5-(2-phosphoethyl)-thiazole from 5-(2-hydroxyethyl)-4-methylthiazole: step 1/1. Functionally, catalyzes the phosphorylation of the hydroxyl group of 4-methyl-5-beta-hydroxyethylthiazole (THZ). The polypeptide is Hydroxyethylthiazole kinase 1 (Methanosphaera stadtmanae (strain ATCC 43021 / DSM 3091 / JCM 11832 / MCB-3)).